The chain runs to 50 residues: Photosystem II reaction center protein M (50 aa).

Residues Gly7 to Ile27 form a helical membrane-spanning segment. The interval Asp31–Ser50 is disordered.

The protein belongs to the PsbM family. In terms of assembly, PSII is composed of 1 copy each of membrane proteins PsbA, PsbB, PsbC, PsbD, PsbE, PsbF, PsbH, PsbI, PsbJ, PsbK, PsbL, PsbM, PsbT, PsbX, PsbY, Psb30/Ycf12, peripheral proteins PsbO, CyanoQ (PsbQ), PsbU, PsbV and a large number of cofactors. It forms dimeric complexes.

It localises to the cellular thylakoid membrane. One of the components of the core complex of photosystem II (PSII). PSII is a light-driven water:plastoquinone oxidoreductase that uses light energy to abstract electrons from H(2)O, generating O(2) and a proton gradient subsequently used for ATP formation. It consists of a core antenna complex that captures photons, and an electron transfer chain that converts photonic excitation into a charge separation. This subunit is found at the monomer-monomer interface. This is Photosystem II reaction center protein M from Prochlorococcus marinus (strain SARG / CCMP1375 / SS120).